The following is a 330-amino-acid chain: Glycerol-3-phosphate dehydrogenase [NAD(P)+] (330 aa).

Residues tryptophan 11, arginine 31, histidine 32, and lysine 105 each coordinate NADPH. Lysine 105 and glycine 133 together coordinate sn-glycerol 3-phosphate. Alanine 137 contributes to the NADPH binding site. The sn-glycerol 3-phosphate site is built by lysine 188, aspartate 241, serine 251, arginine 252, and asparagine 253. The active-site Proton acceptor is the lysine 188. An NADPH-binding site is contributed by arginine 252. Positions 277 and 279 each coordinate NADPH.

The protein belongs to the NAD-dependent glycerol-3-phosphate dehydrogenase family.

Its subcellular location is the cytoplasm. The enzyme catalyses sn-glycerol 3-phosphate + NAD(+) = dihydroxyacetone phosphate + NADH + H(+). The catalysed reaction is sn-glycerol 3-phosphate + NADP(+) = dihydroxyacetone phosphate + NADPH + H(+). The protein operates within membrane lipid metabolism; glycerophospholipid metabolism. Its function is as follows. Catalyzes the reduction of the glycolytic intermediate dihydroxyacetone phosphate (DHAP) to sn-glycerol 3-phosphate (G3P), the key precursor for phospholipid synthesis. The protein is Glycerol-3-phosphate dehydrogenase [NAD(P)+] of Orientia tsutsugamushi (strain Boryong) (Rickettsia tsutsugamushi).